A 176-amino-acid chain; its full sequence is Inorganic pyrophosphatase (176 aa).

Substrate-binding residues include Lys30, Arg44, and Tyr56. Positions 66, 71, and 103 each coordinate Mg(2+). Tyr142 contacts substrate.

This sequence belongs to the PPase family. Homohexamer. Mg(2+) is required as a cofactor.

It is found in the cytoplasm. The catalysed reaction is diphosphate + H2O = 2 phosphate + H(+). Catalyzes the hydrolysis of inorganic pyrophosphate (PPi) forming two phosphate ions. In Escherichia coli O157:H7, this protein is Inorganic pyrophosphatase.